The sequence spans 125 residues: Glycine cleavage system H protein (125 aa).

Residues 22–103 (VFVVGITENA…AFTAWIFKIK (82 aa)) form the Lipoyl-binding domain. Lys63 carries the post-translational modification N6-lipoyllysine.

This sequence belongs to the GcvH family. The glycine cleavage system is composed of four proteins: P, T, L and H. (R)-lipoate serves as cofactor.

Functionally, the glycine cleavage system catalyzes the degradation of glycine. The H protein shuttles the methylamine group of glycine from the P protein to the T protein. The protein is Glycine cleavage system H protein of Bordetella avium (strain 197N).